The primary structure comprises 178 residues: Adenine phosphoribosyltransferase (178 aa).

It belongs to the purine/pyrimidine phosphoribosyltransferase family. In terms of assembly, homodimer.

Its subcellular location is the cytoplasm. The catalysed reaction is AMP + diphosphate = 5-phospho-alpha-D-ribose 1-diphosphate + adenine. It participates in purine metabolism; AMP biosynthesis via salvage pathway; AMP from adenine: step 1/1. In terms of biological role, catalyzes a salvage reaction resulting in the formation of AMP, that is energically less costly than de novo synthesis. This chain is Adenine phosphoribosyltransferase, found in Erythrobacter litoralis (strain HTCC2594).